A 599-amino-acid chain; its full sequence is Sulfite reductase [NADPH] flavoprotein alpha-component (599 aa).

The 139-residue stretch at 64 to 202 (ITIISASQTG…AASEWRARVV (139 aa)) folds into the Flavodoxin-like domain. FMN-binding positions include 70–75 (SQTGNA), 117–120 (STQG), and 153–162 (LGDSSYEFFC). The FAD-binding FR-type domain maps to 234–448 (DAPLVASLSV…IEHNDNFRLP (215 aa)). FAD-binding positions include T322, A356, 386-389 (RLYS), 404-406 (TVG), Y410, and 419-422 (GGAS). NADP(+) is bound by residues 519-520 (SR), 525-529 (KVYVQ), and D561. Y599 lines the FAD pocket.

This sequence belongs to the NADPH-dependent sulphite reductase flavoprotein subunit CysJ family. The protein in the N-terminal section; belongs to the flavodoxin family. In the C-terminal section; belongs to the flavoprotein pyridine nucleotide cytochrome reductase family. In terms of assembly, alpha(8)-beta(8). The alpha component is a flavoprotein, the beta component is a hemoprotein. It depends on FAD as a cofactor. FMN is required as a cofactor.

The catalysed reaction is hydrogen sulfide + 3 NADP(+) + 3 H2O = sulfite + 3 NADPH + 4 H(+). It participates in sulfur metabolism; hydrogen sulfide biosynthesis; hydrogen sulfide from sulfite (NADPH route): step 1/1. Its function is as follows. Component of the sulfite reductase complex that catalyzes the 6-electron reduction of sulfite to sulfide. This is one of several activities required for the biosynthesis of L-cysteine from sulfate. The flavoprotein component catalyzes the electron flow from NADPH -&gt; FAD -&gt; FMN to the hemoprotein component. The sequence is that of Sulfite reductase [NADPH] flavoprotein alpha-component from Shigella dysenteriae serotype 1 (strain Sd197).